We begin with the raw amino-acid sequence, 254 residues long: Pyruvate dehydrogenase complex repressor (254 aa).

The region spanning 9–77 is the HTH gntR-type domain; it reads PKLSDVIEQQ…QGGGTFVQSS (69 aa). The H-T-H motif DNA-binding region spans 37–56; sequence ERELAKQFDVSRPSLREAIQ.

Transcriptional repressor for the pyruvate dehydrogenase complex genes aceEF and lpd. The chain is Pyruvate dehydrogenase complex repressor (pdhR) from Salmonella typhi.